We begin with the raw amino-acid sequence, 1021 residues long: Ribosome quality control complex subunit 2 (1021 aa).

Positions 348–388 (IEAQKLKKRAHDRLATAERRLESAKEDQARKLQSLQDAQAT) form a coiled coil. Positions 457–484 (NPESVDNSDESSETSDDDLDDSDDDNKV) are disordered. Acidic residues predominate over residues 462–480 (DNSDESSETSDDDLDDSDD). S478 is subject to Phosphoserine. 2 coiled-coil regions span residues 507 to 546 (NARK…DLKR) and 698 to 727 (DEKS…LKME). 2 stretches are compositionally biased toward polar residues: residues 746–761 (YNED…TTGS) and 839–856 (ISSQ…TPTA). Disordered regions lie at residues 746–801 (YNED…TALE) and 832–905 (HAAR…VESF). Positions 876–905 (DQSRNSEAENEKGLSTEQRDEKKHAKVESF) are enriched in basic and acidic residues.

It belongs to the NEMF family. Component of the ribosome quality control complex (RQC), composed of the E3 ubiquitin ligase rkr1/ltn1, rqc1 and mtr1/rqc2, as well as cdc48 and its ubiquitin-binding cofactors associated with the 60S ribosomal subunit. RQC2 binds to the 40S-binding surface of tRNAs.

The protein localises to the cytoplasm. In terms of biological role, key component of the ribosome quality control complex (RQC), a ribosome-associated complex that mediates the extraction of incompletely synthesized nascent chains from stalled ribosomes as well as their ubiquitin-mediated proteasomal degradation. Thereby, frees 60S subunit ribosomes from the stalled translation complex and prevents the accumulation of nascent polypeptide chains that are potentially toxic for the cell. Within the RQC complex, mtr1/rqc2 specifically binds stalled 60S ribosomal subunits by recognizing an exposed, nascent chain-conjugated tRNA moiety and promotes the recruitment of rkr1/ltn1 to stalled 60S subunits. Following binding to stalled 60S ribosomal subunits, mtr1/rqc2 mediates CAT tailing by recruiting alanine- and threonine-charged tRNA to the A-site and directing the elongation of stalled nascent chains independently of mRNA or 40S subunits, leading to non-templated C-terminal Ala and Thr extensions (CAT tails). CAT tails promote the rkr1/ltn1-mediated ubiquitination of incompletely synthesized nascent polypeptides: CAT tailing facilitates rkr1/ltn1-dependent ubiquitination by exposing lysine residues that would otherwise remain buried in the ribosomal exit tunnel. Following ubiquitination, incompletely synthesized nascent polypeptides are recognized by CDC48 and degraded by the proteasome. CAT-tailed proteins tend to aggregate and sequester chaperones and can induce proteotoxic stress; their rkr1/ltn1-dependent ubiquitination and degradation is required to prevent proteotoxic stress. This chain is Ribosome quality control complex subunit 2, found in Schizosaccharomyces pombe (strain 972 / ATCC 24843) (Fission yeast).